The primary structure comprises 271 residues: Protein PXR1 (271 aa).

2 disordered regions span residues 1–26 and 149–233; these read MGLA…NNTS and KKRP…DSAA. Residues 17–26 show a composition bias toward polar residues; that stretch reads RNTTWSNNTS. The G-patch domain maps to 25 to 71; it reads TSRFGHKHLEKLGWKPGSGLGLVPDSTTSHIKVSIKDDNLGLGAKLK. A compositionally biased stretch (basic residues) spans 165–205; the sequence is KKTKKVKKEKKVKKVKKEKKEKKEKKDKKEKKVKKEKKEKK. Residues 206-230 are compositionally biased toward basic and acidic residues; that stretch reads EKKLKDKHSKDTNEITRDQMLKPRD.

This sequence belongs to the PINX1 family.

The protein resides in the nucleus. The protein localises to the nucleolus. Involved in rRNA-processing at A0, A1 and A2 sites and negatively regulates telomerase. The sequence is that of Protein PXR1 (PXR1) from Kluyveromyces lactis (strain ATCC 8585 / CBS 2359 / DSM 70799 / NBRC 1267 / NRRL Y-1140 / WM37) (Yeast).